The chain runs to 596 residues: Phosphoenolpyruvate carboxykinase [GTP] (596 aa).

Substrate is bound by residues arginine 77 and tyrosine 205–glycine 207. 2 residues coordinate Mn(2+): lysine 214 and histidine 234. Serine 256 contributes to the substrate binding site. Alanine 257 to asparagine 262 provides a ligand contact to GTP. Residue cysteine 258 is part of the active site. Mn(2+) is bound at residue aspartate 283. The segment at lysine 362–proline 388 is disordered. A substrate-binding site is contributed by asparagine 373–arginine 375. Residues arginine 375, arginine 406, and tyrosine 499–asparagine 502 contribute to the GTP site.

It belongs to the phosphoenolpyruvate carboxykinase [GTP] family. Monomer. Mn(2+) serves as cofactor.

It localises to the cytoplasm. It carries out the reaction oxaloacetate + GTP = phosphoenolpyruvate + GDP + CO2. It participates in carbohydrate biosynthesis; gluconeogenesis. Catalyzes the conversion of oxaloacetate (OAA) to phosphoenolpyruvate (PEP), the rate-limiting step in the metabolic pathway that produces glucose from lactate and other precursors derived from the citric acid cycle. This chain is Phosphoenolpyruvate carboxykinase [GTP], found in Anaeromyxobacter dehalogenans (strain 2CP-1 / ATCC BAA-258).